Reading from the N-terminus, the 906-residue chain is Inter-alpha-trypsin inhibitor heavy chain H1 (906 aa).

The first 22 residues, 1–22, serve as a signal peptide directing secretion; that stretch reads MGLRGLLCVCLVSLLALQAVAA. Positions 23–29 are excised as a propeptide; that stretch reads QGSPTRN. The VIT domain occupies 32-161; it reads GGKKRMAVDA…KATFRLTYEE (130 aa). A glycan (S-linked (Hex...) cysteine) is linked at Cys55. Ser124 is subject to Phosphoserine. Residues 287–470 form the VWFA domain; sequence NVVFVIDISS…QQLQGFYEQV (184 aa). Thr397 and Thr402 each carry phosphothreonine. Asn583 is a glycosylation site (N-linked (GlcNAc...) asparagine). An O-linked (GalNAc...) serine glycan is attached at Ser643. An O-linked (GalNAc...) threonine glycan is attached at Thr648. Aspartate 1-(chondroitin 4-sulfate)-ester is present on Asp667. Positions 668–906 are excised as a propeptide; the sequence is PHFLIHVPQK…HTDYIVPDIF (239 aa). Asn745 carries an N-linked (GlcNAc...) asparagine glycan.

Belongs to the ITIH family. As to quaternary structure, I-alpha-I plasma protease inhibitors are assembled from one or two heavy chains (HC) and one light chain, bikunin. Inter-alpha-inhibitor (I-alpha-I) is composed of ITIH1/HC1, ITIH2/HC2 and bikunin. Interacts with TNFAIP6 (via Link and CUB domains). Post-translationally, heavy chains are linked to bikunin via chondroitin 4-sulfate esterified to the alpha-carboxyl of the C-terminal aspartate after propeptide cleavage. In terms of processing, the S-linked glycan is composed of two 6-carbon sugars, possibly Glc or Gal.

The protein localises to the secreted. In terms of biological role, may act as a carrier of hyaluronan in serum or as a binding protein between hyaluronan and other matrix protein, including those on cell surfaces in tissues to regulate the localization, synthesis and degradation of hyaluronan which are essential to cells undergoing biological processes. The chain is Inter-alpha-trypsin inhibitor heavy chain H1 (ITIH1) from Bos taurus (Bovine).